A 351-amino-acid polypeptide reads, in one-letter code: S-adenosylmethionine:tRNA ribosyltransferase-isomerase (351 aa).

The protein belongs to the QueA family. As to quaternary structure, monomer.

The protein localises to the cytoplasm. It carries out the reaction 7-aminomethyl-7-carbaguanosine(34) in tRNA + S-adenosyl-L-methionine = epoxyqueuosine(34) in tRNA + adenine + L-methionine + 2 H(+). The protein operates within tRNA modification; tRNA-queuosine biosynthesis. Its function is as follows. Transfers and isomerizes the ribose moiety from AdoMet to the 7-aminomethyl group of 7-deazaguanine (preQ1-tRNA) to give epoxyqueuosine (oQ-tRNA). This chain is S-adenosylmethionine:tRNA ribosyltransferase-isomerase, found in Hydrogenovibrio crunogenus (strain DSM 25203 / XCL-2) (Thiomicrospira crunogena).